We begin with the raw amino-acid sequence, 362 residues long: Somatostatin receptor type 5 (362 aa).

Over residues Met-1 to Pro-10 the composition is skewed to polar residues. Positions Met-1–Trp-24 are disordered. The Extracellular portion of the chain corresponds to Met-1–Ala-35. Positions Ser-11 to Trp-24 are enriched in low complexity. Residues Asn-13 and Asn-23 are each glycosylated (N-linked (GlcNAc...) asparagine). A helical transmembrane segment spans residues Arg-36–Leu-63. Topologically, residues Arg-64–Asn-73 are cytoplasmic. A helical membrane pass occupies residues Val-74–Val-99. The Extracellular segment spans residues Ser-100–Arg-110. Cys-109 and Cys-184 are oxidised to a cystine. Residues Leu-111–Val-132 traverse the membrane as a helical segment. At Asp-133 to Lys-154 the chain is on the cytoplasmic side. A helical membrane pass occupies residues Leu-155–Ala-175. At Asp-176–Trp-195 the chain is on the extracellular side. The N-linked (GlcNAc...) asparagine glycan is linked to Asn-185. A helical transmembrane segment spans residues Gly-196–Leu-220. Residues Leu-221–Thr-246 lie on the Cytoplasmic side of the membrane. A helical membrane pass occupies residues Arg-247–Ala-272. Over Phe-273–Ala-282 the chain is Extracellular. Residues Gly-283–Ser-307 form a helical membrane-spanning segment. The Cytoplasmic segment spans residues Asp-308–Leu-362. Residue Cys-319 is the site of S-palmitoyl cysteine; by ZDHHC5 attachment. The interval Asp-330–Leu-362 is disordered.

It belongs to the G-protein coupled receptor 1 family. In terms of assembly, heterodimer with SSTR2. Heterodimerization with SSTR2 increases cell growth inhibition activity of SSTR2. Palmitoylated at Cys-319 by ZDHHC5, but not ZDHHC8. Palmitoylation creates an additional intracellular loop which is thought to be important for efficient coupling to G-proteins and may target the protein to lipid rafts. Expressed in adult brain but not in liver, heart, spleen, or kidney.

It localises to the cell membrane. Its function is as follows. Receptor for somatostatin-28. The activity of this receptor is mediated by G proteins which inhibit adenylyl cyclase. Increases cell growth inhibition activity of SSTR2 following heterodimerization. The sequence is that of Somatostatin receptor type 5 (Sstr5) from Mus musculus (Mouse).